A 504-amino-acid chain; its full sequence is Sodium-coupled neutral amino acid symporter 2 (504 aa).

Residues 1–28 are disordered; that stretch reads MNKAPAQMSRFNIAPDMDSSSTNSNEYT. Residues 1–79 are Cytoplasmic-facing; that stretch reads MNKAPAQMSR…SPGSASFGMS (79 aa). The segment at 1-99 is regulates protein turnover upon amino acid deprivation; that stretch reads MNKAPAQMSR…SGILGLSYAM (99 aa). Positions 19 to 28 are enriched in low complexity; that stretch reads SSSTNSNEYT. The chain crosses the membrane as a helical span at residues 80–99; that stretch reads VFNLGNAIMGSGILGLSYAM. N85 serves as a coordination point for Na(+). Topologically, residues 100–105 are extracellular; the sequence is ANTGIA. Residues 106–126 form a helical membrane-spanning segment; the sequence is MFVILLVAVAIFSLYSVHLLL. Residues 127 to 161 are Cytoplasmic-facing; the sequence is KTANEGGSLVYEQLGYKAFGIPGKLAASCSITMQN. The chain crosses the membrane as a helical span at residues 162-180; the sequence is FGAMASYLYIVKYELPIVI. The Extracellular segment spans residues 181 to 189; sequence RAFLDSNDN. The helical transmembrane segment at 190–210 threads the bilayer; that stretch reads AWYTNGDYLVLIVTMSIILPL. Topologically, residues 211-218 are cytoplasmic; the sequence is SLLKNLGY. The helical transmembrane segment at 219–239 threads the bilayer; that stretch reads LGYTSGFSLLCMVFFLIVVIY. Residues 240–285 are Extracellular-facing; that stretch reads KKFQIPCPLPENFINITVNVSQPPQTNNSTDEECCKPKYFIFNSQT. C246 and C274 are oxidised to a cystine. N-linked (GlcNAc...) asparagine glycans are attached at residues N254 and N258. Residues 286–306 form a helical membrane-spanning segment; sequence VYAVPILTFAFVCHPAILPMY. Over 307-322 the chain is Cytoplasmic; it reads EELKDRSRRKMQNVAN. A helical membrane pass occupies residues 323–343; that stretch reads VSFLGMFIMYLLAALFGYLTF. At 344–364 the chain is on the extracellular side; the sequence is NEAVEPELLHTYSKVYNFDVV. Residues 365 to 385 traverse the membrane as a helical segment; sequence LLIVRLAVLTAVTLTVPVVLF. Na(+) is bound at residue T379. Residues 386 to 406 lie on the Cytoplasmic side of the membrane; it reads PIRTSVNHLLGASKEFSWPRH. The helical transmembrane segment at 407–427 threads the bilayer; sequence ICITVALLVCVNILVIFVPTI. The Extracellular segment spans residues 428–429; that stretch reads RD. A helical membrane pass occupies residues 430 to 450; that stretch reads IFGFIGASAAAMLIFILPSAF. Residues 451-465 lie on the Cytoplasmic side of the membrane; it reads YIKLVKKESMKSVQK. A helical membrane pass occupies residues 466 to 488; that stretch reads IGATLFLIMGFLVMTGSMALIIM. The Extracellular segment spans residues 489-504; that stretch reads DWIHNALSSEEHTGGH.

Belongs to the amino acid/polyamine transporter 2 family.

Its subcellular location is the cell membrane. The catalysed reaction is L-alanine(in) + Na(+)(in) = L-alanine(out) + Na(+)(out). It catalyses the reaction glycine(in) + Na(+)(in) = glycine(out) + Na(+)(out). It carries out the reaction L-serine(in) + Na(+)(in) = L-serine(out) + Na(+)(out). The enzyme catalyses L-proline(in) + Na(+)(in) = L-proline(out) + Na(+)(out). The catalysed reaction is L-methionine(in) + Na(+)(in) = L-methionine(out) + Na(+)(out). It catalyses the reaction L-histidine(in) + Na(+)(in) = L-histidine(out) + Na(+)(out). It carries out the reaction L-asparagine(in) + Na(+)(in) = L-asparagine(out) + Na(+)(out). The enzyme catalyses L-glutamine(in) + Na(+)(in) = L-glutamine(out) + Na(+)(out). The catalysed reaction is L-threonine(in) + Na(+)(in) = L-threonine(out) + Na(+)(out). It catalyses the reaction L-leucine(in) + Na(+)(in) = L-leucine(out) + Na(+)(out). It carries out the reaction L-phenylalanine(in) + Na(+)(in) = L-phenylalanine(out) + Na(+)(out). Its activity is regulated as follows. Inhibited by N-methyl-D-glucamine. Inhibited by choline. Allosteric regulation of sodium ions binding by pH. Its function is as follows. Symporter that cotransports neutral amino acids and sodium ions from the extracellular to the intracellular side of the cell membrane. The transport is pH-sensitive, Li(+)-intolerant, electrogenic, driven by the Na(+) electrochemical gradient and cotransports of neutral amino acids and sodium ions with a stoichiometry of 1:1. This is Sodium-coupled neutral amino acid symporter 2 from Danio rerio (Zebrafish).